A 1605-amino-acid chain; its full sequence is Pentafunctional AROM polypeptide (1605 aa).

The segment at Met-1–Asn-384 is 3-dehydroquinate synthase. NAD(+)-binding positions include Asp-44–Asn-46, Glu-81–Lys-84, Gly-114–Val-116, and Asp-119. Arg-130 serves as a coordination point for 7-phospho-2-dehydro-3-deoxy-D-arabino-heptonate. NAD(+) is bound at residue Thr-139–Thr-140. The 7-phospho-2-dehydro-3-deoxy-D-arabino-heptonate site is built by Asp-146 and Lys-152. Residue Lys-161 participates in NAD(+) binding. Asn-162 is a binding site for 7-phospho-2-dehydro-3-deoxy-D-arabino-heptonate. NAD(+)-binding positions include Phe-179–Thr-182 and Asn-190. Glu-194 provides a ligand contact to Zn(2+). 7-phospho-2-dehydro-3-deoxy-D-arabino-heptonate-binding positions include Glu-194 to Lys-197 and Lys-250. Glu-260 acts as the Proton acceptor; for 3-dehydroquinate synthase activity in catalysis. Residues Arg-264 to Asn-268 and His-271 contribute to the 7-phospho-2-dehydro-3-deoxy-D-arabino-heptonate site. Residue His-271 coordinates Zn(2+). His-275 functions as the Proton acceptor; for 3-dehydroquinate synthase activity in the catalytic mechanism. 7-phospho-2-dehydro-3-deoxy-D-arabino-heptonate contacts are provided by His-287 and Lys-356. His-287 lines the Zn(2+) pocket. The tract at residues Val-397 to Val-842 is EPSP synthase. The active-site For EPSP synthase activity is Cys-824. The segment at Ser-864 to Ser-1055 is shikimate kinase. Gly-871–Thr-878 is an ATP binding site. Residues Leu-1056–Asp-1276 form a 3-dehydroquinase region. His-1179 serves as the catalytic Proton acceptor; for 3-dehydroquinate dehydratase activity. Lys-1207 serves as the catalytic Schiff-base intermediate with substrate; for 3-dehydroquinate dehydratase activity. Residues Lys-1289–Ser-1605 form a shikimate dehydrogenase region.

This sequence in the N-terminal section; belongs to the sugar phosphate cyclases superfamily. Dehydroquinate synthase family. It in the 2nd section; belongs to the EPSP synthase family. In the 3rd section; belongs to the shikimate kinase family. The protein in the 4th section; belongs to the type-I 3-dehydroquinase family. This sequence in the C-terminal section; belongs to the shikimate dehydrogenase family. Homodimer. Requires Zn(2+) as cofactor.

It localises to the cytoplasm. The enzyme catalyses 7-phospho-2-dehydro-3-deoxy-D-arabino-heptonate = 3-dehydroquinate + phosphate. It catalyses the reaction 3-dehydroquinate = 3-dehydroshikimate + H2O. It carries out the reaction shikimate + NADP(+) = 3-dehydroshikimate + NADPH + H(+). The catalysed reaction is shikimate + ATP = 3-phosphoshikimate + ADP + H(+). The enzyme catalyses 3-phosphoshikimate + phosphoenolpyruvate = 5-O-(1-carboxyvinyl)-3-phosphoshikimate + phosphate. It participates in metabolic intermediate biosynthesis; chorismate biosynthesis; chorismate from D-erythrose 4-phosphate and phosphoenolpyruvate: step 2/7. Its pathway is metabolic intermediate biosynthesis; chorismate biosynthesis; chorismate from D-erythrose 4-phosphate and phosphoenolpyruvate: step 3/7. The protein operates within metabolic intermediate biosynthesis; chorismate biosynthesis; chorismate from D-erythrose 4-phosphate and phosphoenolpyruvate: step 4/7. It functions in the pathway metabolic intermediate biosynthesis; chorismate biosynthesis; chorismate from D-erythrose 4-phosphate and phosphoenolpyruvate: step 5/7. It participates in metabolic intermediate biosynthesis; chorismate biosynthesis; chorismate from D-erythrose 4-phosphate and phosphoenolpyruvate: step 6/7. The AROM polypeptide catalyzes 5 consecutive enzymatic reactions in prechorismate polyaromatic amino acid biosynthesis. This chain is Pentafunctional AROM polypeptide, found in Aspergillus fumigatus (strain CBS 144.89 / FGSC A1163 / CEA10) (Neosartorya fumigata).